A 131-amino-acid polypeptide reads, in one-letter code: Calvin cycle protein CP12-2, chloroplastic (131 aa).

Residues 1–53 (MATIATGLNIATQRVFVTSENRPVCLAGPVHLNNSWNLGSRTTNRMMKLQPIK) constitute a chloroplast transit peptide. Disulfide bonds link cysteine 75/cysteine 84 and cysteine 117/cysteine 126. Positions 97 to 131 (AASHARDKKKADGSDPLEEYCKDNPETNECRTYDN) are disordered. Basic and acidic residues predominate over residues 105-131 (KKADGSDPLEEYCKDNPETNECRTYDN).

Belongs to the CP12 family. As to quaternary structure, monomer. Component of a complex that contains two dimers of PRK, two tetramers of GAPDH and CP12. CP12 associates with GAPDH, causing its conformation to change. This GAPDH/CP12 complex binds PRK to form a half-complex (one unit). This unit probably dimerizes due partially to interactions between the enzymes of each unit. Contains two disulfide bonds; only the oxidized protein, with two disulfide bonds, is active in complex formation. The C-terminal disulfide is involved in the interaction with GAPDH and the N-terminal disulfide mediates the binding of PRK with this binary complex. As to expression, mostly expressed in cotyledons, leaves and flower stalks, and, to a lower extent, in flowers and stems. Barely detectable in roots and siliques.

Its subcellular location is the plastid. It is found in the chloroplast. In terms of biological role, acts as a linker essential in the assembly of a core complex of PRK/GAPDH. Coordinates the reversible inactivation of chloroplast enzymes GAPDH and PRK during darkness in photosynthetic tissues. The protein is Calvin cycle protein CP12-2, chloroplastic (CP12-2) of Arabidopsis thaliana (Mouse-ear cress).